The chain runs to 1323 residues: PAS domain-containing serine/threonine-protein kinase (1323 aa).

M1 bears the N-acetylmethionine mark. Position 19 is a phosphoserine (S19). Residues 20–47 (LPLPVSAEGPAAQTTAEPSRSFSSAHRH) are disordered. Residues 31-43 (AQTTAEPSRSFSS) are compositionally biased toward polar residues. The residue at position 34 (T34) is a Phosphothreonine. PAS domains are found at residues 119–190 (SSPL…MEAD) and 335–402 (YRAS…SLQL). S582 carries the phosphoserine modification. The disordered stretch occupies residues 837-857 (AASDRESPGHVPSTLDAGPED). S939 is modified (phosphoserine). Positions 999–1251 (YSTMSPLGSG…LEKLVTDPWV (253 aa)) constitute a Protein kinase domain. ATP contacts are provided by residues 1005 to 1013 (LGSGAFGFV), K1028, and 1082 to 1089 (EKHGSGLD). The active-site Proton acceptor is the D1128. An ATP-binding site is contributed by D1146. Phosphothreonine; by autocatalysis occurs at positions 1161 and 1165. The disordered stretch occupies residues 1298–1323 (CGGPVPGEAPNGQGCLHPGDPRLLTS).

The protein belongs to the protein kinase superfamily. CAMK Ser/Thr protein kinase family. Autophosphorylated on Thr-1161 and Thr-1165. Autophosphorylation is activated by phospholipids. Ubiquitously expressed, with slightly higher expression in brain, prostate and testis. Reduced expression was found in placenta. Present in germ cells of testis and in the midpiece of sperm tails (at protein level).

It is found in the cytoplasm. It localises to the nucleus. It catalyses the reaction L-seryl-[protein] + ATP = O-phospho-L-seryl-[protein] + ADP + H(+). The catalysed reaction is L-threonyl-[protein] + ATP = O-phospho-L-threonyl-[protein] + ADP + H(+). Protein kinase activity is inhibited by the first PAS domain: binding of an unidentified ligand desinhibits the protein kinase activity. May be activated by autophosphorylation on Thr-1161 and Thr-1165. The activating role of autophosphorylation at Thr-1161 is unclear: according to a report, autophosphorylation at Thr-1161 does not play a major role in activation. Autophosphorylation is enhanced upon phosphatidylinositol monophosphate (phosphatidylinositol 4-phosphate) binding and inhibited upon phosphatidylinositol bi- and tri-phosphate binding. In contrast, phosphorylation of target proteins is inhibited upon all phosphatidylinositol-binding (phosphatidylinositol mono- bi- and tri-phosphate). In terms of biological role, serine/threonine-protein kinase involved in energy homeostasis and protein translation. Phosphorylates EEF1A1, GYS1, PDX1 and RPS6. Probably plays a role under changing environmental conditions (oxygen, glucose, nutrition), rather than under standard conditions. Acts as a sensor involved in energy homeostasis: regulates glycogen synthase synthesis by mediating phosphorylation of GYS1, leading to GYS1 inactivation. May be involved in glucose-stimulated insulin production in pancreas and regulation of glucagon secretion by glucose in alpha cells; however such data require additional evidences. May play a role in regulation of protein translation by phosphorylating EEF1A1, leading to increase translation efficiency. May also participate in respiratory regulation. This chain is PAS domain-containing serine/threonine-protein kinase (PASK), found in Homo sapiens (Human).